Here is a 504-residue protein sequence, read N- to C-terminus: Cytochrome P450 4A25 (504 aa).

Transmembrane regions (helical) follow at residues 6 to 26 and 110 to 130; these read LASA…LLLL and APVL…LLNG. Residue cysteine 451 participates in heme binding.

This sequence belongs to the cytochrome P450 family. Heme is required as a cofactor.

Its subcellular location is the endoplasmic reticulum membrane. The catalysed reaction is an omega-methyl-long-chain fatty acid + reduced [NADPH--hemoprotein reductase] + O2 = an omega-hydroxy-long-chain fatty acid + oxidized [NADPH--hemoprotein reductase] + H2O + H(+). In terms of biological role, catalyzes the omega- and (omega-1)-hydroxylation of various fatty acids such as laurate and palmitate. Has no activity toward taurochenodeoxycholic acid. This chain is Cytochrome P450 4A25 (CYP4A25), found in Sus scrofa (Pig).